Consider the following 634-residue polypeptide: Probable potassium transport system protein Kup (634 aa).

12 helical membrane passes run 19 to 39, 62 to 82, 113 to 133, 150 to 170, 177 to 197, 225 to 245, 259 to 279, 291 to 311, 349 to 369, 379 to 399, 406 to 426, and 431 to 451; these read AIGL…TSPL, VLSL…VIFV, FVVV…MITP, GLEH…FLIQ, IGIL…ALGV, IGVA…ALYA, WFLL…ATIL, LLAP…ATVI, IYIG…VLGF, YGVA…VVIW, LWLG…FFAA, and VIQG…LMST.

Belongs to the HAK/KUP transporter (TC 2.A.72) family.

Its subcellular location is the cell inner membrane. It catalyses the reaction K(+)(in) + H(+)(in) = K(+)(out) + H(+)(out). Its function is as follows. Transport of potassium into the cell. Likely operates as a K(+):H(+) symporter. In Pseudomonas aeruginosa (strain LESB58), this protein is Probable potassium transport system protein Kup.